A 430-amino-acid chain; its full sequence is UDP-N-acetylglucosamine 1-carboxyvinyltransferase (430 aa).

A phosphoenolpyruvate-binding site is contributed by 22–23; sequence KN. A UDP-N-acetyl-alpha-D-glucosamine-binding site is contributed by R102. Catalysis depends on C126, which acts as the Proton donor. C126 bears the 2-(S-cysteinyl)pyruvic acid O-phosphothioketal mark. UDP-N-acetyl-alpha-D-glucosamine is bound by residues 131–135, 172–175, D317, and I339; these read RPVDL and KVSV.

It belongs to the EPSP synthase family. MurA subfamily.

The protein localises to the cytoplasm. It catalyses the reaction phosphoenolpyruvate + UDP-N-acetyl-alpha-D-glucosamine = UDP-N-acetyl-3-O-(1-carboxyvinyl)-alpha-D-glucosamine + phosphate. It functions in the pathway cell wall biogenesis; peptidoglycan biosynthesis. In terms of biological role, cell wall formation. Adds enolpyruvyl to UDP-N-acetylglucosamine. The protein is UDP-N-acetylglucosamine 1-carboxyvinyltransferase of Rhizobium etli (strain CIAT 652).